Consider the following 98-residue polypeptide: Putative pterin-4-alpha-carbinolamine dehydratase (98 aa).

Belongs to the pterin-4-alpha-carbinolamine dehydratase family.

The catalysed reaction is (4aS,6R)-4a-hydroxy-L-erythro-5,6,7,8-tetrahydrobiopterin = (6R)-L-erythro-6,7-dihydrobiopterin + H2O. The protein is Putative pterin-4-alpha-carbinolamine dehydratase of Chelativorans sp. (strain BNC1).